A 498-amino-acid chain; its full sequence is Argininosuccinate lyase 1 (498 aa).

This sequence belongs to the lyase 1 family. Argininosuccinate lyase subfamily.

The protein resides in the cytoplasm. It carries out the reaction 2-(N(omega)-L-arginino)succinate = fumarate + L-arginine. The protein operates within amino-acid biosynthesis; L-arginine biosynthesis; L-arginine from L-ornithine and carbamoyl phosphate: step 3/3. This Shouchella clausii (strain KSM-K16) (Alkalihalobacillus clausii) protein is Argininosuccinate lyase 1.